A 223-amino-acid chain; its full sequence is Thiopurine S-methyltransferase (223 aa).

4 residues coordinate S-adenosyl-L-methionine: Trp10, Leu45, Glu66, and Arg127.

Belongs to the class I-like SAM-binding methyltransferase superfamily. TPMT family.

It localises to the cytoplasm. The enzyme catalyses S-adenosyl-L-methionine + a thiopurine = S-adenosyl-L-homocysteine + a thiopurine S-methylether.. The polypeptide is Thiopurine S-methyltransferase (Shewanella woodyi (strain ATCC 51908 / MS32)).